Consider the following 535-residue polypeptide: Alkaline phosphatase, placental type (535 aa).

The first 22 residues, 1-22, serve as a signal peptide directing secretion; it reads MLGPCMLLLLLLLGLRLQLSLG. Asp64 is a binding site for Mg(2+). Zn(2+) contacts are provided by Asp64 and Ser114. The Phosphoserine intermediate role is filled by Ser114. Cys143 and Cys205 form a disulfide bridge. The N-linked (GlcNAc...) asparagine glycan is linked to Asn144. Ser177 contributes to the Mg(2+) binding site. A Ca(2+)-binding site is contributed by Glu238. Residue Asn271 is glycosylated (N-linked (GlcNAc...) asparagine). Ca(2+) is bound by residues Phe291, Glu292, and Asp307. Glu333 is a Mg(2+) binding site. Zn(2+) is bound by residues Asp338, His342, Asp379, and His380. Residues 425–449 form a disordered region; it reads DGARPDVTESESGSPEYRQQSAVPL. Over residues 434 to 446 the composition is skewed to polar residues; the sequence is SESGSPEYRQQSA. Residue His454 coordinates Zn(2+). A disulfide bond links Cys489 and Cys496. Residue Asp506 is the site of GPI-anchor amidated aspartate attachment. Positions 507–535 are cleaved as a propeptide — removed in mature form; that stretch reads AAHPGRSVVPALLPLLAGTLLLLETATAP. The chain crosses the membrane as a helical span at residues 513-529; sequence SVVPALLPLLAGTLLLL.

Belongs to the alkaline phosphatase family. As to quaternary structure, homodimer. It depends on Mg(2+) as a cofactor. Zn(2+) serves as cofactor. Requires Ca(2+) as cofactor. In terms of tissue distribution, detected in placenta (at protein level).

Its subcellular location is the cell membrane. The enzyme catalyses a phosphate monoester + H2O = an alcohol + phosphate. In terms of biological role, alkaline phosphatase that can hydrolyze various phosphate compounds. This chain is Alkaline phosphatase, placental type, found in Homo sapiens (Human).